Reading from the N-terminus, the 737-residue chain is Catalase-peroxidase 2 (737 aa).

A disordered region spans residues 1–33 (MPEATEHPPIGEAQTEPAQSGCPMVIKPPVEGG). Residues 107–235 (WHAAGTYRVQ…LGASHMGLIY (129 aa)) constitute a cross-link (tryptophyl-tyrosyl-methioninium (Trp-Tyr) (with M-261)). Histidine 108 acts as the Proton acceptor in catalysis. The tryptophyl-tyrosyl-methioninium (Tyr-Met) (with W-107) cross-link spans 235–261 (YVNPEGPEGNPDPIAAAIDIRETFGRM). Histidine 276 contacts heme.

The protein belongs to the peroxidase family. Peroxidase/catalase subfamily. In terms of assembly, homodimer or homotetramer. Heme b serves as cofactor. In terms of processing, formation of the three residue Trp-Tyr-Met cross-link is important for the catalase, but not the peroxidase activity of the enzyme.

It catalyses the reaction H2O2 + AH2 = A + 2 H2O. The catalysed reaction is 2 H2O2 = O2 + 2 H2O. In terms of biological role, bifunctional enzyme with both catalase and broad-spectrum peroxidase activity. In Mycolicibacterium vanbaalenii (strain DSM 7251 / JCM 13017 / BCRC 16820 / KCTC 9966 / NRRL B-24157 / PYR-1) (Mycobacterium vanbaalenii), this protein is Catalase-peroxidase 2.